We begin with the raw amino-acid sequence, 195 residues long: Sec-independent protein translocase protein TatB (195 aa).

A helical membrane pass occupies residues 1–21 (MFDIGFSELVLIFIVGLVVLG). The disordered stretch occupies residues 166–195 (DESQFAAYYPPDDDLASPTPSQPQDKQNVS). Residues 183–195 (PTPSQPQDKQNVS) are compositionally biased toward polar residues.

This sequence belongs to the TatB family. The Tat system comprises two distinct complexes: a TatABC complex, containing multiple copies of TatA, TatB and TatC subunits, and a separate TatA complex, containing only TatA subunits. Substrates initially bind to the TatABC complex, which probably triggers association of the separate TatA complex to form the active translocon.

Its subcellular location is the cell inner membrane. Its function is as follows. Part of the twin-arginine translocation (Tat) system that transports large folded proteins containing a characteristic twin-arginine motif in their signal peptide across membranes. Together with TatC, TatB is part of a receptor directly interacting with Tat signal peptides. TatB may form an oligomeric binding site that transiently accommodates folded Tat precursor proteins before their translocation. This is Sec-independent protein translocase protein TatB from Actinobacillus pleuropneumoniae serotype 5b (strain L20).